The primary structure comprises 205 residues: Inactive ribonuclease-like protein 9 (205 aa).

The first 24 residues, 1-24 (MMLITTHSLPLLLLLLQLWQPLQF), serve as a signal peptide directing secretion. 3 disulfide bridges follow: cysteine 97–cysteine 152, cysteine 115–cysteine 167, and cysteine 122–cysteine 129. 2 N-linked (GlcNAc...) asparagine glycosylation sites follow: asparagine 130 and asparagine 142.

It belongs to the pancreatic ribonuclease family.

It localises to the secreted. Its function is as follows. Does not exhibit any ribonuclease activity. The polypeptide is Inactive ribonuclease-like protein 9 (RNASE9) (Cebus albifrons (White-fronted capuchin)).